Reading from the N-terminus, the 363-residue chain is rRNA processing protein rcl1 (363 aa).

Belongs to the RNA 3'-terminal cyclase family. Type 2 subfamily. Interacts directly with bms1 and the U3 snoRNA to form a stable subcomplex. Component of the 90S small subunit processome also known as 90S pre-ribosome that consists of the 35S pre-rRNA, early-associating ribosomal proteins most of which are part of the small ribosomal subunit, the U3 snoRNA and associated proteins.

It localises to the nucleus. Its subcellular location is the nucleolus. Its function is as follows. Does not have cyclase activity. Plays a role in 40S-ribosomal-subunit biogenesis in the early pre-rRNA processing steps at sites A0, A1 and A2 that are required for proper maturation of the 18S RNA. Rcl1 activates bms1 by promoting GDP/GTP exchange. This Schizosaccharomyces pombe (strain 972 / ATCC 24843) (Fission yeast) protein is rRNA processing protein rcl1 (rcl1).